Consider the following 287-residue polypeptide: tRNA pseudouridine synthase B (287 aa).

Asp38 serves as the catalytic Nucleophile.

The protein belongs to the pseudouridine synthase TruB family. Type 1 subfamily.

The catalysed reaction is uridine(55) in tRNA = pseudouridine(55) in tRNA. Responsible for synthesis of pseudouridine from uracil-55 in the psi GC loop of transfer RNAs. The protein is tRNA pseudouridine synthase B of Mycoplasma mobile (strain ATCC 43663 / 163K / NCTC 11711) (Mesomycoplasma mobile).